Reading from the N-terminus, the 829-residue chain is Leucine--tRNA ligase (829 aa).

The 'HIGH' region signature appears at 40–51 (PYPSGAGLHVGH). The 'KMSKS' region motif lies at 609–613 (KMSKS). Lys612 contacts ATP.

Belongs to the class-I aminoacyl-tRNA synthetase family.

Its subcellular location is the cytoplasm. It catalyses the reaction tRNA(Leu) + L-leucine + ATP = L-leucyl-tRNA(Leu) + AMP + diphosphate. This Lactococcus lactis subsp. lactis (strain IL1403) (Streptococcus lactis) protein is Leucine--tRNA ligase.